Consider the following 56-residue polypeptide: Defensin-1 (56 aa).

Positions 1–24 are cleaved as a signal peptide; it reads MKAIVVLLILALILCLYAMTTVEG. 3 disulfide bridges follow: cysteine 26/cysteine 45, cysteine 31/cysteine 53, and cysteine 35/cysteine 55.

It localises to the secreted. Its function is as follows. Antibacterial protein involved in the immune response to septic injury. When combined with 14.026 kDa and 14.059 kDa hemolymph antimicrobial peptides, it has a strong cooperative activity against the Gram-positive bacteria B.subtilis and S.aureus, and against the Gram-negative bacteria E.coli DH5-alpha and K.pneumoniae ATCC 138833. Does not show detectable antibacterial activity when present alone. Has no hemolytic activity in human erythrocytes. The protein is Defensin-1 of Centruroides limpidus (Mexican scorpion).